The chain runs to 449 residues: uncharacterized protein (449 aa).

S420 carries the phosphoserine modification.

It belongs to the NAD kinase family.

Its subcellular location is the cytoplasm. It is found in the nucleus. This is an uncharacterized protein from Schizosaccharomyces pombe (strain 972 / ATCC 24843) (Fission yeast).